A 371-amino-acid polypeptide reads, in one-letter code: Vasculin (371 aa).

It belongs to the vasculin family.

The protein localises to the nucleus. Functionally, functions as a GC-rich promoter-specific transactivating transcription factor. The sequence is that of Vasculin (gpbp1) from Xenopus laevis (African clawed frog).